Reading from the N-terminus, the 115-residue chain is Large ribosomal subunit protein bL20 (115 aa).

It belongs to the bacterial ribosomal protein bL20 family.

Its function is as follows. Binds directly to 23S ribosomal RNA and is necessary for the in vitro assembly process of the 50S ribosomal subunit. It is not involved in the protein synthesizing functions of that subunit. The polypeptide is Large ribosomal subunit protein bL20 (Synechococcus sp. (strain RCC307)).